The primary structure comprises 277 residues: Tumor necrosis factor-inducible gene 6 protein (277 aa).

Positions 1 to 17 are cleaved as a signal peptide; the sequence is MIILIYLFLLLWEDTQG. The 94-residue stretch at 36–129 folds into the Link domain; that stretch reads GVYHREARSG…SERWDAYCYN (94 aa). 3 disulfides stabilise this stretch: Cys-58–Cys-127, Cys-82–Cys-103, and Cys-135–Cys-161. Asn-118 is a glycosylation site (N-linked (GlcNAc...) asparagine). The CUB domain occupies 135-247; that stretch reads CGGVFTDPKQ…GGFQIKYVAM (113 aa). Ca(2+)-binding residues include Glu-183, Asp-191, Asp-232, Ser-234, and Val-235. Residues Cys-188 and Cys-210 are joined by a disulfide bond. Residue Asn-258 is glycosylated (N-linked (GlcNAc...) asparagine).

As to quaternary structure, interacts (via Link domain) with inter-alpha-inhibitor (I-alpha-I) component bikunin. Interacts with ITIH2/HC2; this interaction is required for transesterification of the HC to hyaluronan. Interacts (via Link and CUB domains) with ITIH1. Chondroitin sulfate may be required for the stability of the complex. Interacts (via Link domain) with various C-X-C and C-C chemokines including PF4, CXCL8, CXCL11, CXCL12, CCL2, CCL7, CCL19, CCL21, and CCL27; this interaction interferes with chemokine binding to glycosaminoglycans. Interacts (primarily via Link domain) with BMP2; this interaction is inhibited by hyaluronan. Interacts (via both Link and CUB domains) with TNFSF11. Interacts (via CUB domain) with FN1 (via type III repeats 9-14); this interaction enhances fibronectin fibril assembly. TNFAIP6 may act as a bridging molecule between FN1 and THBS1. Post-translationally, N-glycosylated. As to expression, expressed in airway epithelium and submucosal gland (at protein level). Colocalizes with bikunin at the ciliary border. Present in bronchoalveolar lavage fluid (at protein level). Expressed in mesenchymal stem cells. Found in the synovial fluid of patients with rheumatoid arthritis.

Its subcellular location is the secreted. In terms of biological role, major regulator of extracellular matrix organization during tissue remodeling. Catalyzes the transfer of a heavy chain (HC) from inter-alpha-inhibitor (I-alpha-I) complex to hyaluronan. Cleaves the ester bond between the C-terminus of the HC and GalNAc residue of the chondroitin sulfate chain in I-alpha-I complex followed by transesterification of the HC to hyaluronan. In the process, potentiates the antiprotease function of I-alpha-I complex through release of free bikunin. Acts as a catalyst in the formation of hyaluronan-HC oligomers and hyaluronan-rich matrix surrounding the cumulus cell-oocyte complex, a necessary step for oocyte fertilization. Assembles hyaluronan in pericellular matrices that serve as platforms for receptor clustering and signaling. Enables binding of hyaluronan deposited on the surface of macrophages to LYVE1 on lymphatic endothelium and facilitates macrophage extravasation. Alters hyaluronan binding to functionally latent CD44 on vascular endothelium, switching CD44 into an active state that supports leukocyte rolling. Modulates the interaction of chemokines with extracellular matrix components and proteoglycans on endothelial cell surface, likely preventing chemokine gradient formation. In a negative feedback mechanism, may limit excessive neutrophil recruitment at inflammatory sites by antagonizing the association of CXCL8 with glycosaminoglycans on vascular endothelium. Has a role in osteogenesis and bone remodeling. Inhibits BMP2-dependent differentiation of mesenchymal stem cell to osteoblasts. Protects against bone erosion during inflammation by inhibiting TNFSF11/RANKL-dependent osteoclast activation. The chain is Tumor necrosis factor-inducible gene 6 protein (TNFAIP6) from Homo sapiens (Human).